The following is a 262-amino-acid chain: Homeobox protein Nkx-6.3 (262 aa).

Positions 140 to 199 (KKHTRPTFTGHQIFALEKTFEQTKYLAGPERARLAYSLGMTESQVKVWFQNRRTKWRKKS) form a DNA-binding region, homeobox. The tract at residues 197–237 (KKSALEPSSSTPRAPGGASGDRAASENEDDEYNKPLDPDSD) is disordered.

Expressed in the developing CNS and gastro-intestinal tract.

The protein localises to the nucleus. In terms of biological role, putative transcription factor, which may be involved in patterning of central nervous system and pancreas. The chain is Homeobox protein Nkx-6.3 (Nkx6-3) from Mus musculus (Mouse).